The sequence spans 137 residues: Large ribosomal subunit protein uL16 (137 aa).

The protein belongs to the universal ribosomal protein uL16 family. In terms of assembly, part of the 50S ribosomal subunit.

In terms of biological role, binds 23S rRNA and is also seen to make contacts with the A and possibly P site tRNAs. This is Large ribosomal subunit protein uL16 from Francisella tularensis subsp. holarctica (strain FTNF002-00 / FTA).